Consider the following 194-residue polypeptide: Large ribosomal subunit protein bL9 (194 aa).

The interval 165–194 (PEDAEEAVANEEEAEAALLDDEDADEYEQG) is disordered. Residues 166–194 (EDAEEAVANEEEAEAALLDDEDADEYEQG) are compositionally biased toward acidic residues.

It belongs to the bacterial ribosomal protein bL9 family.

Binds to the 23S rRNA. This chain is Large ribosomal subunit protein bL9, found in Rhodospirillum rubrum (strain ATCC 11170 / ATH 1.1.1 / DSM 467 / LMG 4362 / NCIMB 8255 / S1).